The chain runs to 73 residues: Mu-sparatoxin-Hv2 (73 aa).

The signal sequence occupies residues 1–20 (MKFAIVITLLLVAFSAVALA). Positions 21-35 (DKSIERAVMDLITAR) are excised as a propeptide. Intrachain disulfides connect Cys-39-Cys-53, Cys-46-Cys-58, and Cys-52-Cys-68. Phenylalanine amide is present on Phe-72.

It belongs to the neurotoxin 10 (Hwtx-1) family. In terms of tissue distribution, expressed by the venom gland.

It localises to the secreted. Insecticidal toxin that potently and irreversibly blocks voltage-gated sodium channels (Nav) in cockroach dorsal unpaired median (DUM) neurons (IC(50)=833.7 nM). It does not change both the steady-state activation and inactivation curves, suggesting it acts as a pore blocker (possibly at Nav site 1). Does not show toxicity when intraperitoneally injected into mouse. The polypeptide is Mu-sparatoxin-Hv2 (Heteropoda venatoria (Brown huntsman spider)).